The following is a 145-amino-acid chain: Extracellular globin-2 (145 aa).

The Globin domain occupies Gln-3–His-145. A disulfide bond links Cys-4 and Cys-133. A heme b-binding site is contributed by His-96.

This sequence belongs to the globin family. As to quaternary structure, the extracellular hemoglobin of the earthworm consists of 12 subunits that have a hexagonal bilayer structure with a molecular weight near 3.8 million. Each one-twelfth subunit is composed primarily of disulfide linked trimers (chains A, B, and C) and monomers (chain D).

This Lumbricus terrestris (Common earthworm) protein is Extracellular globin-2.